The sequence spans 266 residues: MHLEITDLNRVFVGKRGSVVALKNINMHIETGEFVCAVGASGSGKSTLLRLIAGLDTPTSGTINVDGQRVTGPGADRGMVFQHYSLFPWMTVRQNVEFGLKLQGCSQKERFDTASYYLDVVGLINFSEAYPRELSGGMKQRVAIARSLACHPKVLLMDEPFGALDIQTKERMHEYLIDIWQRLQCSILMITHDVEEAVFLAQRVYVLSSRPGTIQRELTINLPGDEETPKNRTYKIKREPEFFKYSDEISSLLRGRETEETEAIAS.

In terms of domain architecture, ABC transporter spans 3-234 (LEITDLNRVF…DEETPKNRTY (232 aa)). Residue 39–46 (GASGSGKS) participates in ATP binding.

The protein belongs to the ABC transporter superfamily. Nitrate/nitrite/cyanate uptake transporter (NitT) (TC 3.A.1.16) family. The complex is composed of two ATP-binding proteins (NrtC and NrtD), two transmembrane proteins (NrtB) and a solute-binding protein (NrtA).

The protein resides in the cell inner membrane. The catalysed reaction is nitrate(out) + ATP + H2O = nitrate(in) + ADP + phosphate + H(+). Its function is as follows. Part of the ABC transporter complex NrtABCD involved in nitrate uptake. The complex is probably also involved in nitrite transport. Probably responsible for energy coupling to the transport system. This chain is Nitrate import ATP-binding protein NrtD (nrtD), found in Synechocystis sp. (strain ATCC 27184 / PCC 6803 / Kazusa).